Reading from the N-terminus, the 1379-residue chain is Protein three rows (1379 aa).

The segment at 1031–1037 is separase cleavage-site; the sequence is VEPIRKQ. Disordered stretches follow at residues 1206–1231, 1248–1309, and 1328–1379; these read PEDK…KQSA, PSAT…ATSK, and ITTS…RHRH. Polar residues predominate over residues 1213-1228; that stretch reads ATGSVSAVKNTASKVK. The span at 1248 to 1267 shows a compositional bias: low complexity; it reads PSATSCSSSGGSGTENTPPS.

As to quaternary structure, interacts with pim and Sse. Cleavage of thr contributes to inactivation of Sse. In terms of processing, proteolytically cleaved after the metaphase-to-anaphase transition, C-terminal cleavage product is degraded. Cleavage can only proceed within complexes that contain active Sse. In terms of tissue distribution, during embryogenesis, expressed in Malpighian tubule buds, and epithelia of foregut and hindgut.

Its subcellular location is the cytoplasm. In terms of biological role, required specifically for chromosome disjunction during all mitoses; maternally provided protein is sufficient until mitosis 14 then zygotic protein is required. Involved in formation and/or maintenance of epithelial structures: bud extension during Malpighian tubule development, and foregut and hindgut morphogenesis. The protein is Protein three rows (thr) of Drosophila melanogaster (Fruit fly).